The following is a 248-amino-acid chain: Probable transcriptional regulatory protein RHE_CH03475 (248 aa).

The protein belongs to the TACO1 family.

It is found in the cytoplasm. The sequence is that of Probable transcriptional regulatory protein RHE_CH03475 from Rhizobium etli (strain ATCC 51251 / DSM 11541 / JCM 21823 / NBRC 15573 / CFN 42).